A 363-amino-acid chain; its full sequence is DNA repair protein rlp1 (363 aa).

Belongs to the RecA family. RAD51 subfamily. As to quaternary structure, interacts with rdl1 and sws1.

It is found in the cytoplasm. The protein resides in the nucleus. Its function is as follows. Required for normal levels of meiotic recombination. Acts in the recombinational pathway of double-strand break (DSB) repair together with rhp51, rhp55 and rad22. Required for the full extent of DNA recombination and cell survival under condition of a replication fork collapse. The protein is DNA repair protein rlp1 of Schizosaccharomyces pombe (strain 972 / ATCC 24843) (Fission yeast).